We begin with the raw amino-acid sequence, 318 residues long: Homoserine O-succinyltransferase (318 aa).

The active-site Acyl-thioester intermediate is the Cys-142. Residues Lys-163 and Ser-192 each coordinate substrate. The active-site Proton acceptor is His-235. Glu-237 is a catalytic residue. Arg-249 is a substrate binding site.

Belongs to the MetA family.

It localises to the cytoplasm. The enzyme catalyses L-homoserine + succinyl-CoA = O-succinyl-L-homoserine + CoA. It participates in amino-acid biosynthesis; L-methionine biosynthesis via de novo pathway; O-succinyl-L-homoserine from L-homoserine: step 1/1. Functionally, transfers a succinyl group from succinyl-CoA to L-homoserine, forming succinyl-L-homoserine. This chain is Homoserine O-succinyltransferase, found in Shewanella putrefaciens (strain CN-32 / ATCC BAA-453).